We begin with the raw amino-acid sequence, 280 residues long: UPF0276 protein NMA0228 (280 aa).

The protein belongs to the UPF0276 family.

In Neisseria meningitidis serogroup A / serotype 4A (strain DSM 15465 / Z2491), this protein is UPF0276 protein NMA0228.